Here is a 603-residue protein sequence, read N- to C-terminus: Aspartate--tRNA(Asp/Asn) ligase (603 aa).

E172 contacts L-aspartate. Positions 196-199 (QLFK) are aspartate. R218 is an L-aspartate binding site. Residues 218–220 (RDE) and Q227 contribute to the ATP site. H457 lines the L-aspartate pocket. E491 contributes to the ATP binding site. Position 498 (R498) interacts with L-aspartate. 543-546 (GLDR) contacts ATP.

The protein belongs to the class-II aminoacyl-tRNA synthetase family. Type 1 subfamily. Homodimer.

The protein localises to the cytoplasm. The catalysed reaction is tRNA(Asx) + L-aspartate + ATP = L-aspartyl-tRNA(Asx) + AMP + diphosphate. Aspartyl-tRNA synthetase with relaxed tRNA specificity since it is able to aspartylate not only its cognate tRNA(Asp) but also tRNA(Asn). Reaction proceeds in two steps: L-aspartate is first activated by ATP to form Asp-AMP and then transferred to the acceptor end of tRNA(Asp/Asn). This Laribacter hongkongensis (strain HLHK9) protein is Aspartate--tRNA(Asp/Asn) ligase.